An 893-amino-acid polypeptide reads, in one-letter code: 104 kDa microneme/rhoptry antigen (893 aa).

Residues 1–19 (MKFLVLLFNILCLFPILGA) form the signal peptide. 3 disordered regions span residues 492–666 (SKKK…FDPK), 681–799 (KTKE…PTGK), and 818–873 (KEHM…RKPD). Composition is skewed to basic and acidic residues over residues 525–565 (SESK…EHKP) and 573–591 (KRPE…ESPK). Over residues 595–606 (RPVSPQRPVSPK) the composition is skewed to low complexity. Composition is skewed to basic and acidic residues over residues 731 to 755 (EEVK…DSPT), 788 to 797 (EAGRILRDPT), and 818 to 830 (KEHM…KIVV). Acidic residues predominate over residues 831-841 (DDDGTEADDED). A compositionally biased stretch (basic residues) spans 851–869 (STVRRRRPRPKKSSKSSKP). Residue D873 is the site of GPI-anchor amidated aspartate attachment. Positions 874–893 (SAFVPSIIFIFLVSLIVGIL) are cleaved as a propeptide — removed in mature form.

It localises to the cell membrane. This chain is 104 kDa microneme/rhoptry antigen, found in Theileria annulata.